A 230-amino-acid polypeptide reads, in one-letter code: Acyl-coenzyme A thioesterase THEM4 (230 aa).

The N-terminal 27 residues, 1–27, are a transit peptide targeting the mitochondrion; sequence MLRNCAMRLRTLGATPARRPGAARRLF. Ser28 and Ser29 each carry phosphoserine. 2 positions are modified to N6-succinyllysine: Lys46 and Lys57. Position 65 is an N6-acetyllysine (Lys65). Lys89 and Lys98 each carry N6-succinyllysine. Asp152 acts as the Proton donor/acceptor in catalysis. Substrate-binding positions include Lys175 and 196-197; that span reads RK. Lys197 is modified (N6-succinyllysine).

Belongs to the THEM4/THEM5 thioesterase family. As to quaternary structure, homodimer and homotetramer. Interacts with AKT1 in the cytosol. In terms of assembly, (Microbial infection) Interacts with V-AKT from AKT8 murine leukemia virus. In terms of processing, phosphorylated.

It is found in the cell membrane. Its subcellular location is the cell projection. It localises to the ruffle membrane. The protein localises to the cytoplasm. The protein resides in the mitochondrion. It is found in the mitochondrion inner membrane. Its subcellular location is the mitochondrion intermembrane space. It carries out the reaction hexadecanoyl-CoA + H2O = hexadecanoate + CoA + H(+). The catalysed reaction is octanoyl-CoA + H2O = octanoate + CoA + H(+). It catalyses the reaction decanoyl-CoA + H2O = decanoate + CoA + H(+). The enzyme catalyses dodecanoyl-CoA + H2O = dodecanoate + CoA + H(+). It carries out the reaction tetradecanoyl-CoA + H2O = tetradecanoate + CoA + H(+). The catalysed reaction is (9Z)-octadecenoyl-CoA + H2O = (9Z)-octadecenoate + CoA + H(+). It catalyses the reaction (5Z,8Z,11Z,14Z)-eicosatetraenoyl-CoA + H2O = (5Z,8Z,11Z,14Z)-eicosatetraenoate + CoA + H(+). Has acyl-CoA thioesterase activity towards medium and long-chain (C14 to C18) fatty acyl-CoA substrates, and probably plays a role in mitochondrial fatty acid metabolism. Plays a role in the apoptotic process, possibly via its regulation of AKT1 activity. The sequence is that of Acyl-coenzyme A thioesterase THEM4 (Them4) from Mus musculus (Mouse).